The following is a 306-amino-acid chain: Transcription initiation factor IIB 2 (306 aa).

The TFIIB-type zinc finger occupies 6–37 (PKRVCPICGSTEFIYDPRRGEIVCAKCGYVIE). Zn(2+)-binding residues include cysteine 10, cysteine 13, cysteine 29, and cysteine 32. 2 tandem repeats follow at residues 123–206 (SELD…ARGL) and 217–298 (EYVD…ELVE).

Belongs to the TFIIB family.

In terms of biological role, stabilizes TBP binding to an archaeal box-A promoter. Also responsible for recruiting RNA polymerase II to the pre-initiation complex (DNA-TBP-TFIIB). The polypeptide is Transcription initiation factor IIB 2 (Thermococcus kodakarensis (strain ATCC BAA-918 / JCM 12380 / KOD1) (Pyrococcus kodakaraensis (strain KOD1))).